The primary structure comprises 153 residues: NADPH-dependent 7-cyano-7-deazaguanine reductase (153 aa).

Residues 1–26 (MVKIHDGASQLGANVAAPRSPEEATL) are disordered. Cys51 functions as the Thioimide intermediate in the catalytic mechanism. Asp58 acts as the Proton donor in catalysis. Residues 73–75 (VES) and 92–93 (HE) contribute to the substrate site.

The protein belongs to the GTP cyclohydrolase I family. QueF type 1 subfamily.

It localises to the cytoplasm. It catalyses the reaction 7-aminomethyl-7-carbaguanine + 2 NADP(+) = 7-cyano-7-deazaguanine + 2 NADPH + 3 H(+). It functions in the pathway tRNA modification; tRNA-queuosine biosynthesis. Its function is as follows. Catalyzes the NADPH-dependent reduction of 7-cyano-7-deazaguanine (preQ0) to 7-aminomethyl-7-deazaguanine (preQ1). The protein is NADPH-dependent 7-cyano-7-deazaguanine reductase of Methylocella silvestris (strain DSM 15510 / CIP 108128 / LMG 27833 / NCIMB 13906 / BL2).